Reading from the N-terminus, the 1087-residue chain is Fanconi-associated nuclease 1 homolog (1087 aa).

Disordered stretches follow at residues 1-79 (MKSN…TPIK), 104-154 (FQKA…PNNL), 169-202 (EFLL…NNIT), 459-486 (TQNS…NNNI), 816-835 (ITSD…EKEN), and 842-871 (SVKK…EEEI). Positions 41–79 (TTTPPKTPTQPIRFTQNNNKENDKSNNNNNNNNTITPIK) are enriched in low complexity. A compositionally biased stretch (polar residues) spans 104 to 115 (FQKASTPSSPQI). Low complexity-rich tracts occupy residues 118–154 (KLPQ…PNNL), 182–202 (NTTT…NNIT), and 467–485 (NNNN…NNNN). Coiled coils occupy residues 419 to 490 (WKSK…KEYD) and 830 to 874 (KIEK…IIEI). A compositionally biased stretch (acidic residues) spans 848–871 (EQEEEEEEEEEGQGQEEEEEEEEI). 4 residues coordinate Mn(2+): Glu899, Asp1023, Glu1051, and Val1052. One can recognise a VRR-NUC domain in the interval 961 to 1083 (DDLLILLNQS…GCDVEVCLVK (123 aa)).

The protein belongs to the FAN1 family. Requires Mn(2+) as cofactor. The cofactor is Mg(2+).

The catalysed reaction is Hydrolytically removes 5'-nucleotides successively from the 3'-hydroxy termini of 3'-hydroxy-terminated oligonucleotides.. In terms of biological role, nuclease required for the repair of DNA interstrand cross-links (ICL). Acts as a 5'-3' exonuclease that anchors at a cut end of DNA and cleaves DNA successively at every third nucleotide, allowing to excise an ICL from one strand through flanking incisions. In Dictyostelium discoideum (Social amoeba), this protein is Fanconi-associated nuclease 1 homolog (mtmr15).